The sequence spans 1207 residues: Ras GTPase-activating protein gap-2 (1207 aa).

2 disordered regions span residues 1-29 (MKVI…SCTK) and 221-316 (RMSS…GSLR). The 344-residue stretch at 40-383 (PPICHGWLIV…WMENLRKTMN (344 aa)) folds into the PH domain. The segment covering 223-236 (SSSSHNLSTRLSGS) has biased composition (low complexity). Composition is skewed to polar residues over residues 237-247 (TQNLNQPTNAY) and 286-297 (ASNTPSRDSSLY). One can recognise a C2 domain in the interval 374–490 (WMENLRKTMN…SSRSPVERWY (117 aa)). Positions 495–504 (SHSDSGTSRI) are enriched in polar residues. A disordered region spans residues 495-516 (SHSDSGTSRIASALGGKSSSQE). A Ras-GAP domain is found at 579–789 (NLAKEFLCDL…HRMKDFLLRI (211 aa)). 4 disordered regions span residues 856 to 903 (GVFH…LGRS), 923 to 1013 (FQTP…SSSS), 1086 to 1107 (ATGG…RASR), and 1163 to 1207 (LKSK…VVPN). Polar residues-rich tracts occupy residues 862–876 (MVQQ…SPQQ) and 891–903 (TPPT…LGRS). The span at 939 to 953 (TGTSSSRTSDKTTSS) shows a compositional bias: low complexity. Residues 955-972 (EIRDDTDSDFELREDRGR) show a composition bias toward basic and acidic residues. Residues 985–1013 (ASPSSSQQASSGYLSNNPSRSSYSNSSSS) show a composition bias toward low complexity. The span at 1181 to 1207 (SGASEDSYDSLSSLDRPSRQSLVVVPN) shows a compositional bias: low complexity.

As to expression, mainly expressed in gonads and vulval cells. Isoform c in expressed in pharyngeal epithelial cells and several rectal/blast cells in the tail region. Isoform f is weakly expressed in four cells symmetrically located in the vulval region. Isoform g is strongly expressed in the pharyngeal muscle cells m6 in addition to several cells in the tail region.

Its subcellular location is the cytoplasm. In terms of biological role, GTPase-activating protein, which acts as a negative regulator for the member of the Ras family let-60. Probably decreases the signaling activity of Ras by stimulating its intrinsic GTPase activity, thereby lowering the levels of GTP-bound, active Ras. The different isoforms may play a distinct role in specific tissues. The chain is Ras GTPase-activating protein gap-2 (gap-2) from Caenorhabditis elegans.